Consider the following 430-residue polypeptide: Adenylosuccinate synthetase (430 aa).

GTP-binding positions include 12 to 18 and 40 to 42; these read GDEGKGK and GHT. The active-site Proton acceptor is Asp-13. Residues Asp-13 and Gly-40 each coordinate Mg(2+). Residues 13–16, 38–41, Thr-130, Arg-144, Gln-224, Thr-239, and Arg-303 each bind IMP; these read DEGK and NAGH. The active-site Proton donor is His-41. Position 299 to 305 (299 to 305) interacts with substrate; that stretch reads TVTGRKR. Residues Arg-305, 331-333, and 413-415 each bind GTP; these read KLD and STS.

It belongs to the adenylosuccinate synthetase family. As to quaternary structure, homodimer. Mg(2+) is required as a cofactor.

The protein localises to the cytoplasm. It catalyses the reaction IMP + L-aspartate + GTP = N(6)-(1,2-dicarboxyethyl)-AMP + GDP + phosphate + 2 H(+). The protein operates within purine metabolism; AMP biosynthesis via de novo pathway; AMP from IMP: step 1/2. Its function is as follows. Plays an important role in the de novo pathway of purine nucleotide biosynthesis. Catalyzes the first committed step in the biosynthesis of AMP from IMP. In Cereibacter sphaeroides (strain KD131 / KCTC 12085) (Rhodobacter sphaeroides), this protein is Adenylosuccinate synthetase.